The primary structure comprises 646 residues: Wee1-like protein kinase (646 aa).

The tract at residues 1-181 is disordered; the sequence is MSFLSRQQPP…GTPPHKTFRK (181 aa). The segment covering 32 to 43 has biased composition (acidic residues); the sequence is DCEEEEEEEEEE. Ser53 is modified (phosphoserine; by PLK1). Phosphoserine occurs at positions 78 and 85. Residues 94 to 103 are compositionally biased toward low complexity; it reads LLPGACPGAD. The residue at position 123 (Ser123) is a Phosphoserine; by CDK1. Phosphoserine occurs at positions 127, 137, 139, 150, and 165. The segment covering 158-170 has biased composition (basic and acidic residues); that stretch reads RAGEGRRSPRPDH. A phosphothreonine mark is found at Thr187, Thr190, and Thr239. A phosphoserine mark is found at Ser270, Ser307, and Ser312. Residues 299–569 enclose the Protein kinase domain; that stretch reads FHELEKIGSG…AMALVKHSVL (271 aa). Residues 305 to 313 and Lys328 each bind ATP; that span reads IGSGEFGSV. Asn342 provides a ligand contact to Mg(2+). Catalysis depends on Asp426, which acts as the Proton acceptor. Positions 431, 463, and 465 each coordinate Mg(2+). The residue at position 642 (Ser642) is a Phosphoserine; by BRSK1 and BRSK2.

It belongs to the protein kinase superfamily. Ser/Thr protein kinase family. WEE1 subfamily. Mg(2+) serves as cofactor. In terms of processing, phosphorylated during M and G1 phases. Also autophosphorylated. Phosphorylation at Ser-642 by BRSK1 and BRSK2 in post-mitotic neurons, leads to down-regulate WEE1 activity in polarized neurons. Phosphorylated at Ser-53 and Ser-123 by PLK1 and CDK1, respectively, generating an signal for degradation that can be recognized by the SCF(BTRC) complex, leading to its ubiquitination and degradation at the onset of G2/M phase. Post-translationally, dephosphorylated at Thr-239 by CTDP1. Dephosphorylated at Ser-53 and Ser-123 by the serine/threonine-protein phosphatase 2A preventing its ubiquitin-mediated degradation. Ubiquitinated and degraded at the onset of G2/M phase.

Its subcellular location is the nucleus. It catalyses the reaction L-tyrosyl-[protein] + ATP = O-phospho-L-tyrosyl-[protein] + ADP + H(+). Synthesis is increased during S and G2 phases, presumably by an increase in transcription; activity is decreased by phosphorylation during M phase. Protein levels fall in M phase as a result of decreased synthesis combined with degradation. Activity seems to be negatively regulated by phosphorylation upon entry into mitosis, although N-terminal phosphorylation might also regulate the protein stability via protection from proteolysis or might regulate the subcellular location. In terms of biological role, acts as a negative regulator of entry into mitosis (G2 to M transition) by protecting the nucleus from cytoplasmically activated cyclin B1-complexed CDK1 before the onset of mitosis by mediating phosphorylation of CDK1 on 'Tyr-15'. Specifically phosphorylates and inactivates cyclin B1-complexed CDK1 reaching a maximum during G2 phase and a minimum as cells enter M phase. Phosphorylation of cyclin B1-CDK1 occurs exclusively on 'Tyr-15' and phosphorylation of monomeric CDK1 does not occur. Its activity increases during S and G2 phases and decreases at M phase when it is hyperphosphorylated. A correlated decrease in protein level occurs at M/G1 phase, probably due to its degradation. This Homo sapiens (Human) protein is Wee1-like protein kinase.